Here is a 701-residue protein sequence, read N- to C-terminus: DNA ligase (701 aa).

Residues 1–21 form a disordered region; sequence MSAKSTPDAGPQEQATEAEAE. Residues 50–54, 100–101, and glutamate 130 contribute to the NAD(+) site; these read DADFD and SL. Residue lysine 132 is the N6-AMP-lysine intermediate of the active site. The NAD(+) site is built by arginine 153, glutamate 193, lysine 309, and lysine 333. Zn(2+) contacts are provided by cysteine 427, cysteine 430, cysteine 446, and cysteine 452. The BRCT domain occupies 616-701; the sequence is SIARTLEGLS…LENGPQAPEG (86 aa).

It belongs to the NAD-dependent DNA ligase family. LigA subfamily. Requires Mg(2+) as cofactor. Mn(2+) is required as a cofactor.

The catalysed reaction is NAD(+) + (deoxyribonucleotide)n-3'-hydroxyl + 5'-phospho-(deoxyribonucleotide)m = (deoxyribonucleotide)n+m + AMP + beta-nicotinamide D-nucleotide.. DNA ligase that catalyzes the formation of phosphodiester linkages between 5'-phosphoryl and 3'-hydroxyl groups in double-stranded DNA using NAD as a coenzyme and as the energy source for the reaction. It is essential for DNA replication and repair of damaged DNA. This chain is DNA ligase, found in Mycobacterium sp. (strain KMS).